A 278-amino-acid chain; its full sequence is Autophagy protein 5 (278 aa).

K148 participates in a covalent cross-link: Glycyl lysine isopeptide (Lys-Gly) (interchain with G-Cter in ATG12).

Belongs to the ATG5 family. As to quaternary structure, conjugated with ATG12. In terms of processing, conjugated to ATG12; which is essential for autophagy.

It is found in the preautophagosomal structure membrane. Its function is as follows. Involved in cytoplasm to vacuole transport (Cvt) and autophagic vesicle formation. Autophagy is essential for maintenance of amino acid levels and protein synthesis under nitrogen starvation. Required for selective autophagic degradation of the nucleus (nucleophagy). Also required for mitophagy, which eliminates defective or superfluous mitochondria in order to fulfill cellular energy requirements and prevent excess ROS production. Conjugation with ATG12, through a ubiquitin-like conjugating system involving ATG7 as an E1-like activating enzyme and ATG10 as an E2-like conjugating enzyme, is essential for its function. The ATG12-ATG5 conjugate acts as an E3-like enzyme which is required for lipidation of ATG8 and ATG8 association to the vesicle membranes. The chain is Autophagy protein 5 (ATG5) from Candida albicans (strain SC5314 / ATCC MYA-2876) (Yeast).